Reading from the N-terminus, the 265-residue chain is Transmembrane protein 270 (265 aa).

A run of 3 helical transmembrane segments spans residues 72–92 (PLGQALWAGLALIQVPVWLVL), 130–150 (LFLSCLHGLMLVALLLVVVTW), and 185–205 (LYWWVETMTALTSWHLAYLIT). Positions 229–265 (QEVEPQEVSGSSLLPSLSASSDSESGTVLPEQETPRE) are disordered. The segment covering 237-253 (SGSSLLPSLSASSDSES) has biased composition (low complexity).

The protein localises to the membrane. This chain is Transmembrane protein 270, found in Homo sapiens (Human).